Reading from the N-terminus, the 514-residue chain is Probable endopolygalacturonase D (514 aa).

The signal sequence occupies residues Met1–Ala16. The disordered stretch occupies residues Ile134–Thr166. Residues Ser136–Thr166 are compositionally biased toward low complexity. A disulfide bond links Cys173 and Cys188. Asn240 carries N-linked (GlcNAc...) asparagine glycosylation. PbH1 repeat units lie at residues Val280–Asn302, Thr303–Ser341, Ser342–Ser363, Gly364–Ser384, Val393–Thr414, Val422–Gln444, and Ser456–Gly500. A disordered region spans residues Thr312 to Asp335. Asn322 carries N-linked (GlcNAc...) asparagine glycosylation. Asp356 functions as the Proton donor in the catalytic mechanism. Cys358 and Cys374 are oxidised to a cystine. N-linked (GlcNAc...) asparagine glycosylation is present at Asn366. His378 is an active-site residue. Asn429 is a glycosylation site (N-linked (GlcNAc...) asparagine). Cys483 and Cys488 are oxidised to a cystine. A glycan (N-linked (GlcNAc...) asparagine) is linked at Asn490. A disulfide bond links Cys506 and Cys513.

The protein belongs to the glycosyl hydrolase 28 family.

It is found in the secreted. It catalyses the reaction (1,4-alpha-D-galacturonosyl)n+m + H2O = (1,4-alpha-D-galacturonosyl)n + (1,4-alpha-D-galacturonosyl)m.. Functionally, involved in maceration and soft-rotting of plant tissue. Hydrolyzes the 1,4-alpha glycosidic bonds of de-esterified pectate in the smooth region of the plant cell wall. The chain is Probable endopolygalacturonase D (pgaD) from Emericella nidulans (strain FGSC A4 / ATCC 38163 / CBS 112.46 / NRRL 194 / M139) (Aspergillus nidulans).